A 991-amino-acid chain; its full sequence is Gingipain R1 (991 aa).

Positions Met1–Gln24 are cleaved as a signal peptide. Residues Gln25 to Arg227 constitute a propeptide that is removed on maturation. Ca(2+)-binding residues include Asp305, Val327, Asp330, Tyr332, Glu334, Glu388, and His393. Catalysis depends on His438, which acts as the Proton donor. The Nucleophile role is filled by Cys471. Ca(2+) is bound by residues Phe476, Glu485, Asp519, Glu520, Glu523, and His529.

It belongs to the peptidase C25 family.

It localises to the secreted. It carries out the reaction Hydrolysis of proteins and small molecule substrates, with a preference for Arg in P1.. Requires cysteine for activation and Ca(2+) and/or Mg(2+) for stabilization. It is stimulated by glycine-containing dipeptides. It is resistant to inhibition by proteinase inhibitors in human plasma. Functionally, thiol protease. Acts synergistically with RgpB to catalyze the maturation of fimbrial subunits, such as FimA. Its proteolytic activity is a major factor in both periodontal tissue destruction and in evasion of host defense mechanisms. The polypeptide is Gingipain R1 (rgpA) (Porphyromonas gingivalis (Bacteroides gingivalis)).